We begin with the raw amino-acid sequence, 185 residues long: Photosystem I assembly protein Ycf4 (185 aa).

2 helical membrane passes run 22–42 (FFFA…GFSS) and 57–77 (IIFV…LFFS).

The protein belongs to the Ycf4 family.

It is found in the plastid. It localises to the chloroplast thylakoid membrane. Seems to be required for the assembly of the photosystem I complex. The polypeptide is Photosystem I assembly protein Ycf4 (Welwitschia mirabilis (Tree tumbo)).